A 64-amino-acid chain; its full sequence is Large ribosomal subunit protein bL35 (64 aa).

Positions 17 to 41 (TGSGKVKRERMNGSHNLEHKNRKRT) are disordered. The segment covering 25–35 (ERMNGSHNLEH) has biased composition (basic and acidic residues).

This sequence belongs to the bacterial ribosomal protein bL35 family.

The polypeptide is Large ribosomal subunit protein bL35 (Chlorobaculum parvum (strain DSM 263 / NCIMB 8327) (Chlorobium vibrioforme subsp. thiosulfatophilum)).